The sequence spans 447 residues: ATP-dependent protease ATPase subunit HslU (447 aa).

ATP-binding positions include I18, G60 to E65, D259, E325, and R397.

It belongs to the ClpX chaperone family. HslU subfamily. In terms of assembly, a double ring-shaped homohexamer of HslV is capped on each side by a ring-shaped HslU homohexamer. The assembly of the HslU/HslV complex is dependent on binding of ATP.

It is found in the cytoplasm. ATPase subunit of a proteasome-like degradation complex; this subunit has chaperone activity. The binding of ATP and its subsequent hydrolysis by HslU are essential for unfolding of protein substrates subsequently hydrolyzed by HslV. HslU recognizes the N-terminal part of its protein substrates and unfolds these before they are guided to HslV for hydrolysis. This is ATP-dependent protease ATPase subunit HslU from Burkholderia cenocepacia (strain HI2424).